A 113-amino-acid chain; its full sequence is Putative single-stranded DNA-binding protein ycf41 (113 aa).

The SSB domain maps to 1 to 101 (MNYASFIIKI…EVSGFKIYPF (101 aa)).

It localises to the plastid. The protein resides in the chloroplast. The polypeptide is Putative single-stranded DNA-binding protein ycf41 (ycf41) (Trieres chinensis (Marine centric diatom)).